The primary structure comprises 263 residues: MASNMLQLSLPPLSSSSSSLPFLSSSVYVLPFTHQRRHFSFFNVQNYRFRLSRSTSLGPLFVNKEEDSATYAVTEEEEDNDDDDPDPQSLEYVSQIKRVLELLKRNRDMLFGEVKLTIMIEDPRDVERRRLLGIDDENAPTRDDLAAALEEINEGKVPKDFAALQMLAEEMNSWPNLEVEATKQNKPGRSLYAKATDTGIDPKEAAKRLKIDWDSAAEIDESAESDEPDVPPALGYGALYLVSAFPIIIGISVVLILFYNSLQ.

The transit peptide at 1-71 directs the protein to the chloroplast; the sequence is MASNMLQLSL…VNKEEDSATY (71 aa). The helical transmembrane segment at 238 to 258 threads the bilayer; that stretch reads ALYLVSAFPIIIGISVVLILF.

Belongs to the Y3IP1/CEST family. Interacts with Ycf3.

The protein resides in the plastid. It localises to the chloroplast thylakoid membrane. In terms of biological role, nuclear genome-encoded factor that participates in photosystem I (PSI) biogenesis. Cooperates with the plastid genome-encoded protein PSI assembly Ycf3 in the assembly of stable PSI units in the thylakoid membrane. The polypeptide is Ycf3-interacting protein 1, chloroplastic (Nicotiana tabacum (Common tobacco)).